Reading from the N-terminus, the 145-residue chain is Basic phospholipase A2 PC17 (145 aa).

A signal peptide spans 1–21 (MYPAHLLLLLAVCVSLLGASA). Positions 22-27 (IPPLPL) are excised as a propeptide. Intrachain disulfides connect Cys-38–Cys-98, Cys-54–Cys-144, Cys-56–Cys-72, Cys-71–Cys-125, Cys-78–Cys-118, Cys-87–Cys-111, and Cys-105–Cys-116. Ca(2+) is bound by residues Tyr-55, Gly-57, and Gly-59. His-75 is a catalytic residue. Asp-76 serves as a coordination point for Ca(2+). Residue Asp-119 is part of the active site.

This sequence belongs to the phospholipase A2 family. Group I subfamily. D49 sub-subfamily. It depends on Ca(2+) as a cofactor.

The protein localises to the secreted. It carries out the reaction a 1,2-diacyl-sn-glycero-3-phosphocholine + H2O = a 1-acyl-sn-glycero-3-phosphocholine + a fatty acid + H(+). In terms of biological role, PLA2 catalyzes the calcium-dependent hydrolysis of the 2-acyl groups in 3-sn-phosphoglycerides. The sequence is that of Basic phospholipase A2 PC17 from Laticauda laticaudata (Blue-ringed sea krait).